A 247-amino-acid chain; its full sequence is Phosphoglycerate mutase 1 (247 aa).

Residues 8–15 (RHGQSEWN) and 21–22 (TG) contribute to the substrate site. His9 acts as the Tele-phosphohistidine intermediate in catalysis. Ser12 is modified (phosphoserine). Lys31 is covalently cross-linked (Glycyl lysine isopeptide (Lys-Gly) (interchain with G-Cter in ubiquitin)). Residue Tyr49 is modified to Phosphotyrosine. Lys57 participates in a covalent cross-link: Glycyl lysine isopeptide (Lys-Gly) (interchain with G-Cter in ubiquitin). Position 60 (Arg60) interacts with substrate. Lys71 participates in a covalent cross-link: Glycyl lysine isopeptide (Lys-Gly) (interchain with G-Cter in ubiquitin). The active-site Proton donor/acceptor is Glu87. Residues 87 to 90 (ERHY), Lys98, and 114 to 115 (RR) contribute to the substrate site. Phosphoserine is present on residues Ser116, Ser127, and Ser128. Residues Lys139 and Lys175 each participate in a glycyl lysine isopeptide (Lys-Gly) (interchain with G-Cter in ubiquitin) cross-link. 183-184 (GN) is a substrate binding site. Ser185 carries the post-translational modification Phosphoserine. Lys191 participates in a covalent cross-link: Glycyl lysine isopeptide (Lys-Gly) (interchain with G-Cter in ubiquitin). Ser197 carries the phosphoserine modification.

It belongs to the phosphoglycerate mutase family. BPG-dependent PGAM subfamily. In terms of assembly, homotetramer: dimer of dimers.

It is found in the cytoplasm. It localises to the mitochondrion outer membrane. The protein localises to the mitochondrion intermembrane space. The catalysed reaction is (2R)-2-phosphoglycerate = (2R)-3-phosphoglycerate. It participates in carbohydrate degradation; glycolysis; pyruvate from D-glyceraldehyde 3-phosphate: step 3/5. With respect to regulation, inhibited by inositol hexakisphosphate and benzene tri-, tetra- and hexacarboxylates. In terms of biological role, interconversion of 3- and 2-phosphoglycerate with 2,3-bisphosphoglycerate as the primer of the reaction. Can also catalyze the reaction of EC 5.4.2.4 (synthase), but with a reduced activity. The protein is Phosphoglycerate mutase 1 (GPM1) of Saccharomyces cerevisiae (strain ATCC 204508 / S288c) (Baker's yeast).